The following is a 297-amino-acid chain: Acetyl-coenzyme A carboxylase carboxyl transferase subunit beta (297 aa).

In terms of domain architecture, CoA carboxyltransferase N-terminal spans 25–294 (LWVKCPETGQ…VPPKGRLPAP (270 aa)).

This sequence belongs to the AccD/PCCB family. As to quaternary structure, acetyl-CoA carboxylase is a heterohexamer composed of biotin carboxyl carrier protein (AccB), biotin carboxylase (AccC) and two subunits each of ACCase subunit alpha (AccA) and ACCase subunit beta (AccD).

The protein localises to the cytoplasm. It carries out the reaction N(6)-carboxybiotinyl-L-lysyl-[protein] + acetyl-CoA = N(6)-biotinyl-L-lysyl-[protein] + malonyl-CoA. Its pathway is lipid metabolism; malonyl-CoA biosynthesis; malonyl-CoA from acetyl-CoA: step 1/1. Functionally, component of the acetyl coenzyme A carboxylase (ACC) complex. Biotin carboxylase (BC) catalyzes the carboxylation of biotin on its carrier protein (BCCP) and then the CO(2) group is transferred by the transcarboxylase to acetyl-CoA to form malonyl-CoA. This is Acetyl-coenzyme A carboxylase carboxyl transferase subunit beta from Azorhizobium caulinodans (strain ATCC 43989 / DSM 5975 / JCM 20966 / LMG 6465 / NBRC 14845 / NCIMB 13405 / ORS 571).